The following is a 364-amino-acid chain: tRNA 2-selenouridine synthase (364 aa).

In terms of domain architecture, Rhodanese spans 14 to 137 (LLADTPLIDV…LRQTAIQATW (124 aa)). The S-selanylcysteine intermediate role is filled by Cys-97.

This sequence belongs to the SelU family. In terms of assembly, monomer.

The enzyme catalyses 5-methylaminomethyl-2-thiouridine(34) in tRNA + selenophosphate + (2E)-geranyl diphosphate + H2O + H(+) = 5-methylaminomethyl-2-selenouridine(34) in tRNA + (2E)-thiogeraniol + phosphate + diphosphate. It carries out the reaction 5-methylaminomethyl-2-thiouridine(34) in tRNA + (2E)-geranyl diphosphate = 5-methylaminomethyl-S-(2E)-geranyl-thiouridine(34) in tRNA + diphosphate. The catalysed reaction is 5-methylaminomethyl-S-(2E)-geranyl-thiouridine(34) in tRNA + selenophosphate + H(+) = 5-methylaminomethyl-2-(Se-phospho)selenouridine(34) in tRNA + (2E)-thiogeraniol. It catalyses the reaction 5-methylaminomethyl-2-(Se-phospho)selenouridine(34) in tRNA + H2O = 5-methylaminomethyl-2-selenouridine(34) in tRNA + phosphate. Its function is as follows. Involved in the post-transcriptional modification of the uridine at the wobble position (U34) of tRNA(Lys), tRNA(Glu) and tRNA(Gln). Catalyzes the conversion of 2-thiouridine (S2U-RNA) to 2-selenouridine (Se2U-RNA). Acts in a two-step process involving geranylation of 2-thiouridine (S2U) to S-geranyl-2-thiouridine (geS2U) and subsequent selenation of the latter derivative to 2-selenouridine (Se2U) in the tRNA chain. This chain is tRNA 2-selenouridine synthase, found in Salmonella paratyphi B (strain ATCC BAA-1250 / SPB7).